Reading from the N-terminus, the 228-residue chain is Translin (228 aa).

The tract at residues R86–H90 is DNA/RNA binding. Positions L177–L198 are leucine-zipper. K187 carries the N6-acetyllysine modification. Phosphoserine is present on S190. K199 bears the N6-acetyllysine mark.

The protein belongs to the translin family. In terms of assembly, ring-shaped heterooctamer of six TSN and two TSNAX subunits, DNA/RNA binding occurs inside the ring.

It localises to the cytoplasm. The protein resides in the nucleus. Functionally, DNA-binding protein that specifically recognizes consensus sequences at the breakpoint junctions in chromosomal translocations, mostly involving immunoglobulin (Ig)/T-cell receptor gene segments. Seems to recognize single-stranded DNA ends generated by staggered breaks occurring at recombination hot spots. In terms of biological role, exhibits both single-stranded and double-stranded endoribonuclease activity. May act as an activator of RNA-induced silencing complex (RISC) by facilitating endonucleolytic cleavage of the siRNA passenger strand. The sequence is that of Translin from Homo sapiens (Human).